The sequence spans 63 residues: uncharacterized protein (63 aa).

This is an uncharacterized protein from Bdellovibrio bacteriovorus (Bacteriophage phiMH2K).